A 598-amino-acid polypeptide reads, in one-letter code: Elongation factor 4 (598 aa).

In terms of domain architecture, tr-type G spans 2–184 (DNVRNFAIIA…AIITKLPAPQ (183 aa)). GTP is bound by residues 14 to 19 (DHGKST) and 131 to 134 (NKVD).

This sequence belongs to the TRAFAC class translation factor GTPase superfamily. Classic translation factor GTPase family. LepA subfamily.

The protein resides in the cell membrane. The catalysed reaction is GTP + H2O = GDP + phosphate + H(+). In terms of biological role, required for accurate and efficient protein synthesis under certain stress conditions. May act as a fidelity factor of the translation reaction, by catalyzing a one-codon backward translocation of tRNAs on improperly translocated ribosomes. Back-translocation proceeds from a post-translocation (POST) complex to a pre-translocation (PRE) complex, thus giving elongation factor G a second chance to translocate the tRNAs correctly. Binds to ribosomes in a GTP-dependent manner. The protein is Elongation factor 4 of Wolbachia sp. subsp. Brugia malayi (strain TRS).